The chain runs to 224 residues: Cytidylate kinase (224 aa).

Residue 11 to 19 participates in ATP binding; sequence GPAAAGKST.

This sequence belongs to the cytidylate kinase family. Type 1 subfamily.

It is found in the cytoplasm. It catalyses the reaction CMP + ATP = CDP + ADP. It carries out the reaction dCMP + ATP = dCDP + ADP. This chain is Cytidylate kinase, found in Bacillus velezensis (strain DSM 23117 / BGSC 10A6 / LMG 26770 / FZB42) (Bacillus amyloliquefaciens subsp. plantarum).